A 52-amino-acid polypeptide reads, in one-letter code: Metchnikowin (52 aa).

An N-terminal signal peptide occupies residues 1 to 24 (MQLNLGAIFLALLGVMATATSVLA). Positions 25–26 (EP) are excised as a propeptide. A disordered region spans residues 28–52 (RHQGPIFDTRPSPFNPNQPRPGPIY). Residues 40 to 52 (PFNPNQPRPGPIY) are compositionally biased toward pro residues.

As to expression, hemolymph (at protein level). Highest expression in fat body.

It is found in the secreted. In terms of biological role, potent antifungal and antibacterial activity against Gram-positive bacteria. The chain is Metchnikowin (Mtk) from Drosophila melanogaster (Fruit fly).